The sequence spans 368 residues: Spermidine/putrescine import ATP-binding protein PotA (368 aa).

One can recognise an ABC transporter domain in the interval isoleucine 8–valine 238. Residue glycine 40–threonine 47 participates in ATP binding.

This sequence belongs to the ABC transporter superfamily. Spermidine/putrescine importer (TC 3.A.1.11.1) family. The complex is composed of two ATP-binding proteins (PotA), two transmembrane proteins (PotB and PotC) and a solute-binding protein (PotD).

The protein resides in the cell inner membrane. The enzyme catalyses ATP + H2O + polyamine-[polyamine-binding protein]Side 1 = ADP + phosphate + polyamineSide 2 + [polyamine-binding protein]Side 1.. In terms of biological role, part of the ABC transporter complex PotABCD involved in spermidine/putrescine import. Responsible for energy coupling to the transport system. This is Spermidine/putrescine import ATP-binding protein PotA from Nitratidesulfovibrio vulgaris (strain ATCC 29579 / DSM 644 / CCUG 34227 / NCIMB 8303 / VKM B-1760 / Hildenborough) (Desulfovibrio vulgaris).